The following is a 98-amino-acid chain: Beta-elicitin DRE-beta (98 aa).

Intrachain disulfides connect Cys-3–Cys-71, Cys-27–Cys-56, and Cys-51–Cys-95.

Belongs to the elicitin family.

Its subcellular location is the secreted. Its function is as follows. Induces local and distal defense responses (incompatible hypersensitive reaction) in plants from the solanaceae and cruciferae families. Elicits leaf necrosis and causes the accumulation of pathogenesis-related proteins. Might interact with the lipidic molecules of the plasma membrane. This Phytophthora drechsleri protein is Beta-elicitin DRE-beta.